The primary structure comprises 343 residues: MKVSIIGATGYGGLELIRLLHQHASVDIATLHSFSAQSETLATFYPHLKDLEASPLEKINSAEIIEKSDTVFIATPSGIAKDIALPYVDAGLNVIDLSGDFRLKDRQLYEKWYGKSAAPIEYIAKAEYGLAEFRDKKEARFIANPGCYATATLLGIAPLVKSQLIDPTSIIVDAKSGISGAGKVPSASTHFTETNENMTLYKMNSHQHIPEIMQQLTKWDETIPAIQFSTSLIPITRGIFTTIYVKPKNPITQKELHTLYKSTYENAPFVRIQPENVYPTVKQVTASNYCDIGLAYNEKTNVITIVSVLDNLVKGAAGQAIQNLNIMANFAESDGLRFIPVYP.

Cys147 is an active-site residue.

This sequence belongs to the NAGSA dehydrogenase family. Type 1 subfamily.

The protein resides in the cytoplasm. The catalysed reaction is N-acetyl-L-glutamate 5-semialdehyde + phosphate + NADP(+) = N-acetyl-L-glutamyl 5-phosphate + NADPH + H(+). It functions in the pathway amino-acid biosynthesis; L-arginine biosynthesis; N(2)-acetyl-L-ornithine from L-glutamate: step 3/4. In terms of biological role, catalyzes the NADPH-dependent reduction of N-acetyl-5-glutamyl phosphate to yield N-acetyl-L-glutamate 5-semialdehyde. The sequence is that of N-acetyl-gamma-glutamyl-phosphate reductase from Listeria monocytogenes serotype 4b (strain CLIP80459).